Here is a 301-residue protein sequence, read N- to C-terminus: Sulfate adenylyltransferase subunit 2 1 (301 aa).

The protein belongs to the PAPS reductase family. CysD subfamily. In terms of assembly, heterodimer composed of CysD, the smaller subunit, and CysN.

It carries out the reaction sulfate + ATP + H(+) = adenosine 5'-phosphosulfate + diphosphate. It participates in sulfur metabolism; hydrogen sulfide biosynthesis; sulfite from sulfate: step 1/3. With CysN forms the ATP sulfurylase (ATPS) that catalyzes the adenylation of sulfate producing adenosine 5'-phosphosulfate (APS) and diphosphate, the first enzymatic step in sulfur assimilation pathway. APS synthesis involves the formation of a high-energy phosphoric-sulfuric acid anhydride bond driven by GTP hydrolysis by CysN coupled to ATP hydrolysis by CysD. The chain is Sulfate adenylyltransferase subunit 2 1 from Shewanella sediminis (strain HAW-EB3).